The primary structure comprises 488 residues: Glutamyl-tRNA(Gln) amidotransferase subunit A (488 aa).

Active-site charge relay system residues include K77 and S152. S176 serves as the catalytic Acyl-ester intermediate.

It belongs to the amidase family. GatA subfamily. As to quaternary structure, heterotrimer of A, B and C subunits.

It catalyses the reaction L-glutamyl-tRNA(Gln) + L-glutamine + ATP + H2O = L-glutaminyl-tRNA(Gln) + L-glutamate + ADP + phosphate + H(+). Functionally, allows the formation of correctly charged Gln-tRNA(Gln) through the transamidation of misacylated Glu-tRNA(Gln) in organisms which lack glutaminyl-tRNA synthetase. The reaction takes place in the presence of glutamine and ATP through an activated gamma-phospho-Glu-tRNA(Gln). In Streptococcus pyogenes serotype M2 (strain MGAS10270), this protein is Glutamyl-tRNA(Gln) amidotransferase subunit A.